The sequence spans 649 residues: WEB family protein At5g55860 (649 aa).

3 coiled-coil regions span residues 59–227 (EKVL…ACSQ), 267–356 (EFAK…IESV), and 391–461 (TINQ…MSEK). A compositionally biased stretch (basic and acidic residues) spans 443-453 (EAKAAETKALE). The segment at 443-483 (EAKAAETKALEQIKSMSEKTNAARNSTSSESGSQSITLSQE) is disordered. Residues 456 to 467 (KSMSEKTNAARN) show a composition bias toward polar residues. Low complexity predominate over residues 468–482 (STSSESGSQSITLSQ). Residues 505–549 (AALAQVEAVRASENETLKKLETTQEEIKKLKTATEEALKKAAMAD) adopt a coiled-coil conformation. Residues 583 to 611 (MKMASESSPQQHYKAPKQKPVNNKLEKTK) form a disordered region.

This sequence belongs to the WEB family.

This is WEB family protein At5g55860 from Arabidopsis thaliana (Mouse-ear cress).